A 466-amino-acid polypeptide reads, in one-letter code: Delta-1 crystallin (466 aa).

Residue alanine 2 is modified to Blocked amino end (Ala).

It belongs to the lyase 1 family. Argininosuccinate lyase subfamily. Homotetramer. In terms of processing, the N-terminus is blocked. Eye lens.

Its function is as follows. Delta crystallin, the principal crystallin in embryonic lens, is found only in birds and reptiles. The sequence is that of Delta-1 crystallin (ASL1) from Gallus gallus (Chicken).